The sequence spans 220 residues: Ribosome assembly protein 3 (220 aa).

Residues methionine 1–glutamate 91 are disordered. Basic residues predominate over residues serine 13–arginine 24. The segment covering serine 29–serine 39 has biased composition (low complexity). Basic and acidic residues predominate over residues glutamate 41 to glutamate 72. A compositionally biased stretch (acidic residues) spans aspartate 73–glutamate 91. A Phosphoserine modification is found at serine 83. Threonine 88 is modified (phosphothreonine). The residue at position 99 (serine 99) is a Phosphoserine.

This sequence belongs to the RSA3 family. Associates with nucleolar pre-ribosomal particles. Interacts with DBP6. Together with DBP6, NOP8, URB1 and URB2, forms an RNA-independent complex, which is required during early maturation of nascent 60S ribosomal subunits.

It is found in the nucleus. The protein resides in the nucleolus. Its function is as follows. Required for efficient biogenesis of the 60S ribosomal subunit. The sequence is that of Ribosome assembly protein 3 (RSA3) from Saccharomyces cerevisiae (strain ATCC 204508 / S288c) (Baker's yeast).